The primary structure comprises 90 residues: Small ribosomal subunit protein uS15c (90 aa).

It belongs to the universal ribosomal protein uS15 family. Part of the 30S ribosomal subunit.

It is found in the plastid. It localises to the chloroplast. The polypeptide is Small ribosomal subunit protein uS15c (rps15-A) (Ipomoea purpurea (Common morning glory)).